Reading from the N-terminus, the 115-residue chain is Class I hydrophobin 21 (115 aa).

Residues 1 to 20 (MFAAPATMLVLAALAALSSA) form the signal peptide. Cystine bridges form between Cys30-Cys93, Cys37-Cys87, Cys38-Cys77, and Cys94-Cys107.

Belongs to the fungal hydrophobin family. As to quaternary structure, self-assembles to form functional amyloid fibrils called rodlets. Self-assembly into fibrillar rodlets occurs spontaneously at hydrophobic:hydrophilic interfaces and the rodlets further associate laterally to form amphipathic monolayers.

It localises to the secreted. The protein resides in the cell wall. Its function is as follows. Aerial growth, conidiation, and dispersal of filamentous fungi in the environment rely upon a capability of their secreting small amphipathic proteins called hydrophobins (HPBs) with low sequence identity. Class I can self-assemble into an outermost layer of rodlet bundles on aerial cell surfaces, conferring cellular hydrophobicity that supports fungal growth, development and dispersal; whereas Class II form highly ordered films at water-air interfaces through intermolecular interactions but contribute nothing to the rodlet structure. This chain is Class I hydrophobin 21, found in Pleurotus ostreatus (strain PC15) (Oyster mushroom).